The primary structure comprises 132 residues: Small ribosomal subunit protein uS8 (132 aa).

This sequence belongs to the universal ribosomal protein uS8 family. As to quaternary structure, part of the 30S ribosomal subunit. Contacts proteins S5 and S12.

Its function is as follows. One of the primary rRNA binding proteins, it binds directly to 16S rRNA central domain where it helps coordinate assembly of the platform of the 30S subunit. The chain is Small ribosomal subunit protein uS8 from Brucella melitensis biotype 1 (strain ATCC 23456 / CCUG 17765 / NCTC 10094 / 16M).